The primary structure comprises 253 residues: Ubiquinone biosynthesis O-methyltransferase (253 aa).

4 residues coordinate S-adenosyl-L-methionine: R47, G78, D99, and M141.

The protein belongs to the methyltransferase superfamily. UbiG/COQ3 family.

It catalyses the reaction a 3-demethylubiquinol + S-adenosyl-L-methionine = a ubiquinol + S-adenosyl-L-homocysteine + H(+). The enzyme catalyses a 3-(all-trans-polyprenyl)benzene-1,2-diol + S-adenosyl-L-methionine = a 2-methoxy-6-(all-trans-polyprenyl)phenol + S-adenosyl-L-homocysteine + H(+). It participates in cofactor biosynthesis; ubiquinone biosynthesis. In terms of biological role, O-methyltransferase that catalyzes the 2 O-methylation steps in the ubiquinone biosynthetic pathway. The polypeptide is Ubiquinone biosynthesis O-methyltransferase (Bradyrhizobium diazoefficiens (strain JCM 10833 / BCRC 13528 / IAM 13628 / NBRC 14792 / USDA 110)).